Here is a 331-residue protein sequence, read N- to C-terminus: MKKSLIALTLAALPVAAMADVTLYGTIKAGVETSRSVFHQNGQVTEVTTATGIVDLGSKIGFKGQEDLGNGLKAIWQVEQKASIAGTDSGWGNRQSFIGLKGGFGKLRVGRLNSVLKDTGDINPWDSKSDYLGVNKIAEPEARLISVRYDSPEFAGLSGSVQYALNDNAGRHNSESYHAGFNYKNGGFFVQYGGAYKRHHQVQEGLNIEKYQIHRLVSGYDNDALYASVAVQQQDAKLTDASNSHNSQTEVAATLAYRFGNVTPRVSYAHGFKGLVDDADIGNEYDQVVVGAEYDFSKRTSALVSAGWLQEGKGENKFVATAGGVGLRHKF.

Positions 1 to 19 are cleaved as a signal peptide; the sequence is MKKSLIALTLAALPVAAMA.

It belongs to the Gram-negative porin family. In terms of assembly, homotrimer.

It is found in the cell outer membrane. Serves as a slightly cation selective porin. This chain is Major outer membrane protein P.IB (porB), found in Neisseria meningitidis serogroup B (strain ATCC BAA-335 / MC58).